The sequence spans 221 residues: UPF0758 protein YicR (221 aa).

Residues 99–221 (ALLSPEMTLE…YVSFAERGWI (123 aa)) form the MPN domain. Residues His170, His172, and Asp183 each coordinate Zn(2+). A JAMM motif motif is present at residues 170–183 (HNHPSGCAEPSKAD).

The protein belongs to the UPF0758 family. YicR subfamily.

The polypeptide is UPF0758 protein YicR (Salmonella arizonae (strain ATCC BAA-731 / CDC346-86 / RSK2980)).